The following is a 416-amino-acid chain: Pigment epithelium-derived factor (416 aa).

Residues 1–20 (MQALVLLLWTGALLGFGRCQ) form the signal peptide. S112 and S225 each carry phosphoserine. N283 is a glycosylation site (N-linked (GlcNAc...) asparagine).

This sequence belongs to the serpin family. Interacts with PNPLA2; this interaction stimulates the phospholipase A2 activity of PNPLA2. In terms of tissue distribution, retinal pigment epithelial cells. Located in the interphotoreceptor matrix (IPM) which is between the retinal pigment epithelium and the neural retina.

Its subcellular location is the secreted. It is found in the melanosome. Neurotrophic protein; induces extensive neuronal differentiation in retinoblastoma cells. Potent inhibitor of angiogenesis. As it does not undergo the S (stressed) to R (relaxed) conformational transition characteristic of active serpins, it exhibits no serine protease inhibitory activity. The protein is Pigment epithelium-derived factor (SERPINF1) of Bos taurus (Bovine).